The primary structure comprises 70 residues: Large ribosomal subunit protein bL31 (70 aa).

Zn(2+)-binding residues include Cys-16, Cys-18, Cys-37, and Cys-40.

The protein belongs to the bacterial ribosomal protein bL31 family. Type A subfamily. As to quaternary structure, part of the 50S ribosomal subunit. Zn(2+) is required as a cofactor.

Functionally, binds the 23S rRNA. This chain is Large ribosomal subunit protein bL31, found in Colwellia psychrerythraea (strain 34H / ATCC BAA-681) (Vibrio psychroerythus).